The sequence spans 123 residues: MTRTDTRAGVGALGEQLAVDYLQGLGLRVLARNWRCRYGELDVVVADDAVQAVVFVEVKTRTTDRFGGVAEAVTPVKVRRLRRLAGLWLSEQDARWESVRLDVVTVRIGQGRSPELTHIEGVG.

This sequence belongs to the UPF0102 family.

The chain is UPF0102 protein Mflv_4140 from Mycolicibacterium gilvum (strain PYR-GCK) (Mycobacterium gilvum (strain PYR-GCK)).